The primary structure comprises 319 residues: Alpha-hemolysin (319 aa).

Residues M1–A26 form the signal peptide.

The protein belongs to the aerolysin family. Self-assembles to form first a non-lytic oligomeric intermediate and then, a mushroom-shaped homoheptamer structure of 100 Angstroms in length and up to 100 Angstroms in diameter.

Its subcellular location is the secreted. Alpha-toxin binds to the membrane of eukaryotic cells resulting in the release of low-molecular weight molecules and leading to an eventual osmotic lysis. Inhibits host neutrophil chemotaxis to the lesion region. Heptamer oligomerization and pore formation is required for lytic activity. In Staphylococcus aureus (strain NCTC 8325 / PS 47), this protein is Alpha-hemolysin (hly).